The primary structure comprises 106 residues: 3-oxoacyl-[acyl-carrier-protein] reductase (106 aa).

It belongs to the short-chain dehydrogenases/reductases (SDR) family. In terms of assembly, homotetramer. Mesocarp.

The protein resides in the plastid. It localises to the chloroplast. The catalysed reaction is a (3R)-hydroxyacyl-[ACP] + NADP(+) = a 3-oxoacyl-[ACP] + NADPH + H(+). Its pathway is lipid metabolism; fatty acid biosynthesis. This is 3-oxoacyl-[acyl-carrier-protein] reductase from Persea americana (Avocado).